We begin with the raw amino-acid sequence, 254 residues long: SLA class II histocompatibility antigen, DQ haplotype C alpha chain (254 aa).

The first 23 residues, 1–23 (MVPGRVLMWGALALTTVMSACGG), serve as a signal peptide directing secretion. Positions 24–120 (EDIAADHVAS…KVPEVTVFSK (97 aa)) are alpha-1. Over 24–216 (EDIAADHVAS…IPAPMSELTE (193 aa)) the chain is Extracellular. Residues Asn-104 and Asn-144 are each glycosylated (N-linked (GlcNAc...) asparagine). An Ig-like C1-type domain is found at 113–204 (PEVTVFSKSP…LDKPLLKHWE (92 aa)). The interval 121–203 (SPVILGQPNT…GLDKPLLKHW (83 aa)) is alpha-2. An intrachain disulfide couples Cys-133 to Cys-188. Residues 204 to 216 (EPEIPAPMSELTE) form a connecting peptide region. A helical transmembrane segment spans residues 217–239 (TVVCALGLIVGLVGIVVGTVFII). The Cytoplasmic segment spans residues 240-254 (QGLRSGGPSRHQGSL).

This sequence belongs to the MHC class II family.

The protein resides in the membrane. The polypeptide is SLA class II histocompatibility antigen, DQ haplotype C alpha chain (Sus scrofa (Pig)).